Here is a 465-residue protein sequence, read N- to C-terminus: Iron-sulfur cluster assembly SufBD family protein SAR0880 (465 aa).

It belongs to the iron-sulfur cluster assembly SufBD family.

This chain is Iron-sulfur cluster assembly SufBD family protein SAR0880, found in Staphylococcus aureus (strain MRSA252).